A 1027-amino-acid chain; its full sequence is Abnormal embryogenesis protein 30 (1027 aa).

WD repeat units follow at residues 18-65 and 70-109; these read RTPF…IQAV and KLDSSVSALHFSPDGRFLAAATSKGIIHLLDVETGKVRFS. Disordered stretches follow at residues 619 to 655 and 1005 to 1027; these read NDSSPFLEEDEGEPEQEEQKPDEEPEPEGEPQPACDL and AMDSGRDLTDNGESDEDEEDDDI. Acidic residues-rich tracts occupy residues 625 to 647 and 1014 to 1027; these read LEEDEGEPEQEEQKPDEEPEPEG and DNGESDEDEEDDDI.

This sequence belongs to the APC4 family. The APC/C is probably composed of at least 12 subunits: apc-2, apc-10, apc-11, cdc-26, emb-1, emb-27, emb-30, mat-1, mat-2, mat-3, such-1 and gfi-3.

The protein operates within protein modification; protein ubiquitination. In terms of biological role, probable component of the anaphase promoting complex/cyclosome (APC/C), a cell cycle-regulated E3 ubiquitin ligase that controls progression through mitosis and the G1 phase of the cell cycle. The APC/C complex acts by mediating ubiquitination and subsequent degradation of target proteins. Developmental role in early embryogenesis and the metaphase to anaphase transition in oocyte and spermatocyte meiosis and mitosis in somatic and germ cells. Required for embryonic anterior-posterior axis formation. Negatively regulates ify-1 protein levels during meiosis I. Plays a role in regulating the abundance of glr-1 receptors in postmitotic neurons, which may in turn control animal locomotion. Involved in regulating GABA neurotransmitter release at neuromuscular junctions in GABA motor neurons. This chain is Abnormal embryogenesis protein 30, found in Caenorhabditis elegans.